The chain runs to 319 residues: Acetyl-coenzyme A carboxylase carboxyl transferase subunit alpha (319 aa).

The CoA carboxyltransferase C-terminal domain occupies Lys39–Gly293.

The protein belongs to the AccA family. As to quaternary structure, acetyl-CoA carboxylase is a heterohexamer composed of biotin carboxyl carrier protein (AccB), biotin carboxylase (AccC) and two subunits each of ACCase subunit alpha (AccA) and ACCase subunit beta (AccD).

The protein localises to the cytoplasm. It carries out the reaction N(6)-carboxybiotinyl-L-lysyl-[protein] + acetyl-CoA = N(6)-biotinyl-L-lysyl-[protein] + malonyl-CoA. The protein operates within lipid metabolism; malonyl-CoA biosynthesis; malonyl-CoA from acetyl-CoA: step 1/1. Functionally, component of the acetyl coenzyme A carboxylase (ACC) complex. First, biotin carboxylase catalyzes the carboxylation of biotin on its carrier protein (BCCP) and then the CO(2) group is transferred by the carboxyltransferase to acetyl-CoA to form malonyl-CoA. The chain is Acetyl-coenzyme A carboxylase carboxyl transferase subunit alpha from Parvibaculum lavamentivorans (strain DS-1 / DSM 13023 / NCIMB 13966).